The chain runs to 421 residues: Glucose-1-phosphate adenylyltransferase (421 aa).

Alpha-D-glucose 1-phosphate-binding positions include Y109, G175, 190 to 191, and S208; that span reads EK.

Belongs to the bacterial/plant glucose-1-phosphate adenylyltransferase family. In terms of assembly, homotetramer.

The enzyme catalyses alpha-D-glucose 1-phosphate + ATP + H(+) = ADP-alpha-D-glucose + diphosphate. It participates in glycan biosynthesis; glycogen biosynthesis. In terms of biological role, involved in the biosynthesis of ADP-glucose, a building block required for the elongation reactions to produce glycogen. Catalyzes the reaction between ATP and alpha-D-glucose 1-phosphate (G1P) to produce pyrophosphate and ADP-Glc. In Teredinibacter turnerae (strain ATCC 39867 / T7901), this protein is Glucose-1-phosphate adenylyltransferase.